Reading from the N-terminus, the 150-residue chain is Aspartate 1-decarboxylase 1 (150 aa).

S24 functions as the Schiff-base intermediate with substrate; via pyruvic acid in the catalytic mechanism. The residue at position 24 (S24) is a Pyruvic acid (Ser). T56 provides a ligand contact to substrate. The Proton donor role is filled by Y57. 72-74 (GAA) provides a ligand contact to substrate.

This sequence belongs to the PanD family. As to quaternary structure, heterooctamer of four alpha and four beta subunits. Pyruvate is required as a cofactor. Is synthesized initially as an inactive proenzyme, which is activated by self-cleavage at a specific serine bond to produce a beta-subunit with a hydroxyl group at its C-terminus and an alpha-subunit with a pyruvoyl group at its N-terminus.

The protein localises to the cytoplasm. It carries out the reaction L-aspartate + H(+) = beta-alanine + CO2. It participates in cofactor biosynthesis; (R)-pantothenate biosynthesis; beta-alanine from L-aspartate: step 1/1. Functionally, catalyzes the pyruvoyl-dependent decarboxylation of aspartate to produce beta-alanine. The sequence is that of Aspartate 1-decarboxylase 1 from Mesorhizobium japonicum (strain LMG 29417 / CECT 9101 / MAFF 303099) (Mesorhizobium loti (strain MAFF 303099)).